An 80-amino-acid polypeptide reads, in one-letter code: Cytochrome c oxidase subunit 7B, mitochondrial (80 aa).

A mitochondrion-targeting transit peptide spans 1-24; the sequence is MFPLVKSALNRLQVRSIQQTMARQ. Residues 25–32 are Mitochondrial matrix-facing; that stretch reads SHQKRTPD. Residues 33 to 59 traverse the membrane as a helical segment; the sequence is FHDKYGNAVLASGATFCIVTWTYVATQ. The Mitochondrial intermembrane segment spans residues 60 to 80; it reads VGIEWNLSPVGRVTPKEWRNQ.

This sequence belongs to the cytochrome c oxidase VIIb family. As to quaternary structure, component of the cytochrome c oxidase (complex IV, CIV), a multisubunit enzyme composed of 14 subunits. The complex is composed of a catalytic core of 3 subunits MT-CO1, MT-CO2 and MT-CO3, encoded in the mitochondrial DNA, and 11 supernumerary subunits COX4I1 (or COX4I2), COX5A, COX5B, COX6A1 (or COX6A2), COX6B1 (or COX6B2), COX6C, COX7A2 (or COX7A1), COX7B, COX7C, COX8A and NDUFA4, which are encoded in the nuclear genome. The complex exists as a monomer or a dimer and forms supercomplexes (SCs) in the inner mitochondrial membrane with NADH-ubiquinone oxidoreductase (complex I, CI) and ubiquinol-cytochrome c oxidoreductase (cytochrome b-c1 complex, complex III, CIII), resulting in different assemblies (supercomplex SCI(1)III(2)IV(1) and megacomplex MCI(2)III(2)IV(2)).

It localises to the mitochondrion inner membrane. It participates in energy metabolism; oxidative phosphorylation. Functionally, component of the cytochrome c oxidase, the last enzyme in the mitochondrial electron transport chain which drives oxidative phosphorylation. The respiratory chain contains 3 multisubunit complexes succinate dehydrogenase (complex II, CII), ubiquinol-cytochrome c oxidoreductase (cytochrome b-c1 complex, complex III, CIII) and cytochrome c oxidase (complex IV, CIV), that cooperate to transfer electrons derived from NADH and succinate to molecular oxygen, creating an electrochemical gradient over the inner membrane that drives transmembrane transport and the ATP synthase. Cytochrome c oxidase is the component of the respiratory chain that catalyzes the reduction of oxygen to water. Electrons originating from reduced cytochrome c in the intermembrane space (IMS) are transferred via the dinuclear copper A center (CU(A)) of subunit 2 and heme A of subunit 1 to the active site in subunit 1, a binuclear center (BNC) formed by heme A3 and copper B (CU(B)). The BNC reduces molecular oxygen to 2 water molecules using 4 electrons from cytochrome c in the IMS and 4 protons from the mitochondrial matrix. Plays a role in proper central nervous system (CNS) development in vertebrates. The sequence is that of Cytochrome c oxidase subunit 7B, mitochondrial (COX7B) from Homo sapiens (Human).